The sequence spans 943 residues: U3 small nucleolar RNA-associated protein 12 (943 aa).

WD repeat units lie at residues 77 to 107 (AKPA…KVWD), 119 to 149 (GHKA…IVWD), 161 to 190 (SHKD…KLWD), 202 to 230 (AHTG…KIWK), 389 to 418 (GQRT…KIWN), 428 to 458 (FECG…QLFD), 471 to 501 (AHDA…KFWD), 571 to 601 (GHKL…KIWG), 613 to 643 (AHQD…KYWD), and 655 to 685 (AHQS…RIWE). Residues 715 to 739 (EGNGDDAFKADASGEGVEDEASGVH) form a disordered region.

Belongs to the WD repeat WDR3/UTP12 family. Interacts with snoRNA U3. Interacts with MPP10. Component of the ribosomal small subunit (SSU) processome composed of at least 40 protein subunits and snoRNA U3.

It is found in the nucleus. Its subcellular location is the nucleolus. Functionally, involved in nucleolar processing of pre-18S ribosomal RNA. This is U3 small nucleolar RNA-associated protein 12 (DIP2) from Saccharomyces cerevisiae (strain ATCC 204508 / S288c) (Baker's yeast).